The chain runs to 172 residues: Probable tryptophan transport protein (172 aa).

4 helical membrane passes run 7-29 (VIMA…FLGG), 49-71 (VQNV…AFPA), 104-126 (AVLT…LLIV), and 136-158 (FAAV…YPIV).

This sequence belongs to the vitamin uptake transporter (VUT/ECF) (TC 2.A.88) family. TrpP subfamily.

The protein resides in the cell membrane. Probably involved in tryptophan uptake. This chain is Probable tryptophan transport protein (trpP), found in Bacillus subtilis (strain 168).